Consider the following 244-residue polypeptide: MTEKNEKTHKTIEQAEQEGKYIRKVRSFVKREGRLTNNQERAINDHWQTMGLNHSDGVIDAPTLFANENPVVLEIGFGMGKSLVEMAKAAPELNFIGIEVHKPGVGACISSAVEESVSNLKVCEHDAIEILADCIPDDTLTTVQLFFPDPWHKKKHHKRRIVSAEFVETIRQKLKVGGVFHMATDWENYAECMLEDMQSAPGYNNLSESNDYVPRPDSRPLTKFENRGQNLGHGVWDLQFAKKA.

E74, E99, D126, and D149 together coordinate S-adenosyl-L-methionine. D149 is a catalytic residue. Residues K153, D185, and 222 to 225 (TKFE) contribute to the substrate site.

Belongs to the class I-like SAM-binding methyltransferase superfamily. TrmB family.

The catalysed reaction is guanosine(46) in tRNA + S-adenosyl-L-methionine = N(7)-methylguanosine(46) in tRNA + S-adenosyl-L-homocysteine. It participates in tRNA modification; N(7)-methylguanine-tRNA biosynthesis. Catalyzes the formation of N(7)-methylguanine at position 46 (m7G46) in tRNA. The chain is tRNA (guanine-N(7)-)-methyltransferase from Colwellia psychrerythraea (strain 34H / ATCC BAA-681) (Vibrio psychroerythus).